A 244-amino-acid polypeptide reads, in one-letter code: Methylthioribulose-1-phosphate dehydratase (244 aa).

C104 is a binding site for substrate. H122 and H124 together coordinate Zn(2+). E148 acts as the Proton donor/acceptor in catalysis. H204 contributes to the Zn(2+) binding site.

It belongs to the aldolase class II family. MtnB subfamily. Zn(2+) is required as a cofactor.

Its subcellular location is the cytoplasm. It carries out the reaction 5-(methylsulfanyl)-D-ribulose 1-phosphate = 5-methylsulfanyl-2,3-dioxopentyl phosphate + H2O. Its pathway is amino-acid biosynthesis; L-methionine biosynthesis via salvage pathway; L-methionine from S-methyl-5-thio-alpha-D-ribose 1-phosphate: step 2/6. Functionally, catalyzes the dehydration of methylthioribulose-1-phosphate (MTRu-1-P) into 2,3-diketo-5-methylthiopentyl-1-phosphate (DK-MTP-1-P). This chain is Methylthioribulose-1-phosphate dehydratase, found in Cryptococcus neoformans var. neoformans serotype D (strain B-3501A) (Filobasidiella neoformans).